Here is a 149-residue protein sequence, read N- to C-terminus: Ribosomal RNA large subunit methyltransferase H (149 aa).

S-adenosyl-L-methionine-binding positions include L71, G98, and 117 to 122; that span reads LSKLTL.

This sequence belongs to the RNA methyltransferase RlmH family. In terms of assembly, homodimer.

The protein resides in the cytoplasm. It carries out the reaction pseudouridine(1915) in 23S rRNA + S-adenosyl-L-methionine = N(3)-methylpseudouridine(1915) in 23S rRNA + S-adenosyl-L-homocysteine + H(+). In terms of biological role, specifically methylates the pseudouridine at position 1915 (m3Psi1915) in 23S rRNA. The chain is Ribosomal RNA large subunit methyltransferase H from Campylobacter jejuni subsp. doylei (strain ATCC BAA-1458 / RM4099 / 269.97).